The primary structure comprises 393 residues: MGLLRGGLPCARAMARLGAVRSHYCALLLAAALAVCAFYYLGSGRETFSSATKRLKEARAGAPAAPSPPALELARGSVAPAPGAKAKSLEGGGAGPVDYHLLMMFTKAEHNAALQAKARVALRSLLRLAKFEAHEVLNLHFVSEEASREVAKGLLRELLPPAAGFKCKVIFHDVAVLTDKLFPIVEAMQKHFSAGLGTYYSDSIFFLSVAMHQIMPKEILQIIQLDLDLKFKTNIRELFEEFDSFLPGAIIGIAREMQPVYRHTFWQFRHENPQTRVGGPPPEGLPGFNSGVMLLNLEAMRQSPLYSRLLEPAQVQQLADKYHFRGHLGDQDFFTMIGMEHPKLFHVLDCTWNRQLCTWWRDHGYSDVFEAYFRCEGHVKIYHGNCNTPIPED.

Over 1–23 the chain is Cytoplasmic; it reads MGLLRGGLPCARAMARLGAVRSH. The chain crosses the membrane as a helical; Signal-anchor for type II membrane protein span at residues 24-44; sequence YCALLLAAALAVCAFYYLGSG. Residues 45-393 are Lumenal-facing; that stretch reads RETFSSATKR…GNCNTPIPED (349 aa). 104–106 contributes to the UDP-alpha-D-xylose binding site; it reads MFT. Mn(2+) is bound at residue Asp226. Residue Leu227 coordinates UDP-alpha-D-xylose. A Mn(2+)-binding site is contributed by Asp228. Positions 263–266 are interaction with target proteins; that stretch reads HTFW. UDP-alpha-D-xylose-binding residues include Ser290, Leu328, and Gln331. Positions 331 and 360 each coordinate a glycoprotein. Cystine bridges form between Cys350–Cys375 and Cys357–Cys386. His383 serves as a coordination point for Mn(2+). Asn385 contacts a glycoprotein.

This sequence belongs to the glycosyltransferase 8 family. In terms of assembly, homodimer. Dimer formation may be essential for the retention in endoplasmic reticulum. Mg(2+) serves as cofactor. The cofactor is Mn(2+).

The protein resides in the endoplasmic reticulum membrane. The enzyme catalyses 3-O-[alpha-D-xylosyl-(1-&gt;3)-beta-D-glucosyl]-L-seryl-[EGF-like domain protein] + UDP-alpha-D-xylose = 3-O-[alpha-D-xylosyl-(1-&gt;3)-alpha-D-xylosyl-(1-&gt;3)-beta-D-glucosyl]-L-seryl-[EGF-like domain protein] + UDP + H(+). Its function is as follows. Alpha-1,3-xylosyltransferase, which elongates the O-linked xylose-glucose disaccharide attached to EGF-like repeats in the extracellular domain of target proteins by catalyzing the addition of the second xylose. Known targets include Notch proteins and coagulation factors, such as F9. In Homo sapiens (Human), this protein is Xyloside xylosyltransferase 1 (XXYLT1).